A 541-amino-acid polypeptide reads, in one-letter code: Membrane protein insertase YidC (541 aa).

The chain crosses the membrane as a helical span at residues 6 to 26 (SLLVLALIFISFLVYQQWQLD). Residues 34–56 (EQTTSITATSDVPASSPSNSQAI) are disordered. Helical transmembrane passes span 337-357 (FWLL…IICV), 416-436 (LGGC…YWTF), 454-474 (LSAQ…MFLL), and 495-515 (PLVF…YWLV).

Belongs to the OXA1/ALB3/YidC family. Type 1 subfamily. Interacts with the Sec translocase complex via SecD. Specifically interacts with transmembrane segments of nascent integral membrane proteins during membrane integration.

It localises to the cell inner membrane. Required for the insertion and/or proper folding and/or complex formation of integral membrane proteins into the membrane. Involved in integration of membrane proteins that insert both dependently and independently of the Sec translocase complex, as well as at least some lipoproteins. Aids folding of multispanning membrane proteins. The polypeptide is Membrane protein insertase YidC (Haemophilus influenzae (strain 86-028NP)).